The primary structure comprises 710 residues: Gastrulation-defective protein 3 (710 aa).

Residues Ala597–Val615 form a helical membrane-spanning segment.

The protein localises to the membrane. This chain is Gastrulation-defective protein 3 (gadr-3), found in Caenorhabditis elegans.